An 82-amino-acid chain; its full sequence is Acyl carrier protein (82 aa).

The region spanning 3-78 is the Carrier domain; sequence QEIFERVKKV…KAVEHISEKV (76 aa). O-(pantetheine 4'-phosphoryl)serine is present on Ser38.

This sequence belongs to the acyl carrier protein (ACP) family. 4'-phosphopantetheine is transferred from CoA to a specific serine of apo-ACP by AcpS. This modification is essential for activity because fatty acids are bound in thioester linkage to the sulfhydryl of the prosthetic group.

It localises to the cytoplasm. It participates in lipid metabolism; fatty acid biosynthesis. In terms of biological role, carrier of the growing fatty acid chain in fatty acid biosynthesis. In Gloeothece citriformis (strain PCC 7424) (Cyanothece sp. (strain PCC 7424)), this protein is Acyl carrier protein.